A 278-amino-acid polypeptide reads, in one-letter code: Para-Rep C1 (278 aa).

Residues methionine 1–leucine 95 form the CRESS-DNA virus Rep endonuclease domain. Residues phenylalanine 8–asparagine 11 carry the RCR-1 motif. A divalent metal cation-binding residues include glutamate 33 and histidine 39. Residues histidine 39–glutamine 41 carry the RCR-2 motif. The short motif at lysine 48–lysine 69 is the Nuclear localization signal element. Tyrosine 78 (for DNA cleavage activity) is an active-site residue. An RCR-3 motif is present at residues tyrosine 78–lysine 81. Residue glutamate 83 participates in a divalent metal cation binding. The Nuclear localization signal signature appears at leucine 95–histidine 101. Glycine 176–serine 178 contacts ATP.

Belongs to the nanoviridea/circoviridae replication-associated protein family. In terms of assembly, homooligomer (Potential). Rep binds to repeated DNA motifs (iterons). Mg(2+) serves as cofactor. Mn(2+) is required as a cofactor.

The protein resides in the host nucleus. It catalyses the reaction ATP + H2O = ADP + phosphate + H(+). In terms of biological role, initiates and terminates the replication only of its own subviral DNA molecule. The closed circular ssDNA genome is first converted to a superhelical dsDNA. Rep binds a specific hairpin at the genome origin of replication. Introduces an endonucleolytic nick within the intergenic region of the genome, thereby initiating the rolling circle replication (RCR). Following cleavage, binds covalently to the 5'-phosphate of DNA as a tyrosyl ester. The cleavage gives rise to a free 3'-OH that serves as a primer for the cellular DNA polymerase. The polymerase synthesizes the (+) strand DNA by rolling circle mechanism. After one round of replication, a Rep-catalyzed nucleotidyl transfer reaction releases a circular single-stranded virus genome, thereby terminating the replication. Displays origin-specific DNA cleavage, nucleotidyl transferase, ATPase and helicase activities. In Faba bean necrotic yellows C1 alphasatellite (FBNYC1A), this protein is Para-Rep C1 (C1).